A 185-amino-acid chain; its full sequence is Acireductone dioxygenase (185 aa).

Positions 96, 98, 102, and 140 each coordinate Fe(2+). The Ni(2+) site is built by His-96, His-98, Glu-102, and His-140.

This sequence belongs to the acireductone dioxygenase (ARD) family. Monomer. It depends on Fe(2+) as a cofactor. Ni(2+) serves as cofactor.

It catalyses the reaction 1,2-dihydroxy-5-(methylsulfanyl)pent-1-en-3-one + O2 = 3-(methylsulfanyl)propanoate + CO + formate + 2 H(+). It carries out the reaction 1,2-dihydroxy-5-(methylsulfanyl)pent-1-en-3-one + O2 = 4-methylsulfanyl-2-oxobutanoate + formate + 2 H(+). It participates in amino-acid biosynthesis; L-methionine biosynthesis via salvage pathway; L-methionine from S-methyl-5-thio-alpha-D-ribose 1-phosphate: step 5/6. Its function is as follows. Catalyzes 2 different reactions between oxygen and the acireductone 1,2-dihydroxy-3-keto-5-methylthiopentene (DHK-MTPene) depending upon the metal bound in the active site. Fe-containing acireductone dioxygenase (Fe-ARD) produces formate and 2-keto-4-methylthiobutyrate (KMTB), the alpha-ketoacid precursor of methionine in the methionine recycle pathway. Ni-containing acireductone dioxygenase (Ni-ARD) produces methylthiopropionate, carbon monoxide and formate, and does not lie on the methionine recycle pathway. This is Acireductone dioxygenase from Hahella chejuensis (strain KCTC 2396).